Consider the following 147-residue polypeptide: SsrA-binding protein (147 aa).

It belongs to the SmpB family.

It is found in the cytoplasm. Functionally, required for rescue of stalled ribosomes mediated by trans-translation. Binds to transfer-messenger RNA (tmRNA), required for stable association of tmRNA with ribosomes. tmRNA and SmpB together mimic tRNA shape, replacing the anticodon stem-loop with SmpB. tmRNA is encoded by the ssrA gene; the 2 termini fold to resemble tRNA(Ala) and it encodes a 'tag peptide', a short internal open reading frame. During trans-translation Ala-aminoacylated tmRNA acts like a tRNA, entering the A-site of stalled ribosomes, displacing the stalled mRNA. The ribosome then switches to translate the ORF on the tmRNA; the nascent peptide is terminated with the 'tag peptide' encoded by the tmRNA and targeted for degradation. The ribosome is freed to recommence translation, which seems to be the essential function of trans-translation. The chain is SsrA-binding protein from Mycoplasmopsis fermentans (strain ATCC 19989 / NBRC 14854 / NCTC 10117 / PG18) (Mycoplasma fermentans).